Here is a 79-residue protein sequence, read N- to C-terminus: MVERSQHLQDVFLKTVRKQEISLTIFLVNGVKLTGIVTSFDNFCILLRRDGHAQLVYKHAISTIMPGQPIKIFEGEGCE.

The Sm domain maps to 10–70 (DVFLKTVRKQ…ISTIMPGQPI (61 aa)).

The protein belongs to the Hfq family. As to quaternary structure, homohexamer.

Functionally, RNA chaperone that binds small regulatory RNA (sRNAs) and mRNAs to facilitate mRNA translational regulation in response to envelope stress, environmental stress and changes in metabolite concentrations. Also binds with high specificity to tRNAs. This chain is RNA-binding protein Hfq, found in Bartonella bacilliformis (strain ATCC 35685 / KC583 / Herrer 020/F12,63).